Here is a 416-residue protein sequence, read N- to C-terminus: ATP-dependent Clp protease ATP-binding subunit ClpX (416 aa).

One can recognise a ClpX-type ZB domain in the interval 1–54; that stretch reads MFKFGDEKGQLKCSFCGKSQEQVRKLVAGPGVYICDECIELCNEIIEEELNDDV. Zn(2+)-binding residues include C13, C16, C35, and C38. 117–124 is a binding site for ATP; the sequence is PTGCGKTL.

This sequence belongs to the ClpX chaperone family. As to quaternary structure, component of the ClpX-ClpP complex. Forms a hexameric ring that, in the presence of ATP, binds to fourteen ClpP subunits assembled into a disk-like structure with a central cavity, resembling the structure of eukaryotic proteasomes.

ATP-dependent specificity component of the Clp protease. It directs the protease to specific substrates. Can perform chaperone functions in the absence of ClpP. The sequence is that of ATP-dependent Clp protease ATP-binding subunit ClpX from Halothermothrix orenii (strain H 168 / OCM 544 / DSM 9562).